The chain runs to 301 residues: Glycine--tRNA ligase alpha subunit (301 aa).

It belongs to the class-II aminoacyl-tRNA synthetase family. Tetramer of two alpha and two beta subunits.

It is found in the cytoplasm. It carries out the reaction tRNA(Gly) + glycine + ATP = glycyl-tRNA(Gly) + AMP + diphosphate. The polypeptide is Glycine--tRNA ligase alpha subunit (Proteus mirabilis (strain HI4320)).